A 365-amino-acid chain; its full sequence is Pituitary-specific positive transcription factor 1 (365 aa).

A 9aaTAD motif is present at residues 5–12 (AFSADSFT). Positions 160 to 191 (PAVLSEEPPLGGTKDLRLRSRPPDDPPDMDSP) are disordered. A compositionally biased stretch (basic and acidic residues) spans 173–183 (KDLRLRSRPPD). The 75-residue stretch at 188–262 (MDSPQIRELE…ILAKWLDEAE (75 aa)) folds into the POU-specific domain. The homeobox DNA-binding region spans 278 to 337 (KRKRRTTISLGAKEALERSFREKIKPSSQEIVRMAEGLHLEKEVVRVWFCNRRQREKRVK).

This sequence belongs to the POU transcription factor family. Class-1 subfamily.

It localises to the nucleus. Its function is as follows. Transcription factor that activates growth hormone and prolactin genes. Specifically binds to the consensus sequence 5'-TAAAT-3'. This chain is Pituitary-specific positive transcription factor 1 (pou1f1), found in Oncorhynchus keta (Chum salmon).